The following is a 240-amino-acid chain: tRNA pseudouridine synthase A (240 aa).

Catalysis depends on Asp50, which acts as the Nucleophile. Position 109 (Tyr109) interacts with substrate.

This sequence belongs to the tRNA pseudouridine synthase TruA family. As to quaternary structure, homodimer.

It catalyses the reaction uridine(38/39/40) in tRNA = pseudouridine(38/39/40) in tRNA. Its function is as follows. Formation of pseudouridine at positions 38, 39 and 40 in the anticodon stem and loop of transfer RNAs. The protein is tRNA pseudouridine synthase A of Campylobacter jejuni (strain RM1221).